The chain runs to 274 residues: uncharacterized protein (274 aa).

This is an uncharacterized protein from Caenorhabditis elegans.